The primary structure comprises 805 residues: Putative cation-transporting ATPase MJ1226 (805 aa).

A run of 4 helical transmembrane segments spans residues 53–73 (SYFW…SAII), 75–95 (HWVD…VGFW), 226–246 (IGDY…AVEL), and 258–278 (FALV…LSIT). Catalysis depends on Asp-311, which acts as the 4-aspartylphosphate intermediate. 6 helical membrane passes run 615–637 (YVIY…ILIL), 641–663 (PITA…AIAY), 680–700 (ILML…LIFY), 712–734 (ELQS…VTRI), 747–769 (LLFW…GIFM), and 773–790 (GWDL…WMLI).

The protein belongs to the cation transport ATPase (P-type) (TC 3.A.3) family. Type IIIA subfamily.

Its subcellular location is the cell membrane. It catalyses the reaction ATP + H2O = ADP + phosphate + H(+). The chain is Putative cation-transporting ATPase MJ1226 from Methanocaldococcus jannaschii (strain ATCC 43067 / DSM 2661 / JAL-1 / JCM 10045 / NBRC 100440) (Methanococcus jannaschii).